The chain runs to 1065 residues: Carbamoyl phosphate synthase large chain (1065 aa).

A carboxyphosphate synthetic domain region spans residues 1 to 401; sequence MPKRTDIETI…AMLKAVRSLE (401 aa). ATP is bound by residues Arg129, Arg169, Gly175, Gly176, Lys208, Ile210, Glu215, Gly241, Ile242, His243, Gln284, and Glu298. The ATP-grasp 1 domain occupies 133–327; that stretch reads RNLMYELGAP…IAKLAAKIAV (195 aa). Mg(2+) is bound by residues Gln284, Glu298, and Asn300. Residues Gln284, Glu298, and Asn300 each coordinate Mn(2+). The oligomerization domain stretch occupies residues 402-546; it reads TGQVHLELKH…YGTYEEENES (145 aa). Residues 547 to 929 form a carbamoyl phosphate synthetic domain region; the sequence is IKSEKPSVVV…ALYKGLVAAG (383 aa). Residues 671 to 861 form the ATP-grasp 2 domain; that stretch reads EQALRDLNIP…MANIATKAIL (191 aa). 10 residues coordinate ATP: Arg707, Arg746, Leu748, Glu752, Gly777, Val778, His779, Ser780, Gln820, and Glu832. Mg(2+) contacts are provided by Gln820, Glu832, and Asn834. Positions 820, 832, and 834 each coordinate Mn(2+). The MGS-like domain occupies 930 to 1065; the sequence is MEIRTEGTVL…EEMPKAEVVH (136 aa). The allosteric domain stretch occupies residues 930–1065; the sequence is MEIRTEGTVL…EEMPKAEVVH (136 aa).

It belongs to the CarB family. Composed of two chains; the small (or glutamine) chain promotes the hydrolysis of glutamine to ammonia, which is used by the large (or ammonia) chain to synthesize carbamoyl phosphate. Tetramer of heterodimers (alpha,beta)4. Mg(2+) serves as cofactor. It depends on Mn(2+) as a cofactor.

It carries out the reaction hydrogencarbonate + L-glutamine + 2 ATP + H2O = carbamoyl phosphate + L-glutamate + 2 ADP + phosphate + 2 H(+). The catalysed reaction is hydrogencarbonate + NH4(+) + 2 ATP = carbamoyl phosphate + 2 ADP + phosphate + 2 H(+). Its pathway is amino-acid biosynthesis; L-arginine biosynthesis; carbamoyl phosphate from bicarbonate: step 1/1. It participates in pyrimidine metabolism; UMP biosynthesis via de novo pathway; (S)-dihydroorotate from bicarbonate: step 1/3. Functionally, large subunit of the glutamine-dependent carbamoyl phosphate synthetase (CPSase). CPSase catalyzes the formation of carbamoyl phosphate from the ammonia moiety of glutamine, carbonate, and phosphate donated by ATP, constituting the first step of 2 biosynthetic pathways, one leading to arginine and/or urea and the other to pyrimidine nucleotides. The large subunit (synthetase) binds the substrates ammonia (free or transferred from glutamine from the small subunit), hydrogencarbonate and ATP and carries out an ATP-coupled ligase reaction, activating hydrogencarbonate by forming carboxy phosphate which reacts with ammonia to form carbamoyl phosphate. The chain is Carbamoyl phosphate synthase large chain from Lysinibacillus sphaericus (strain C3-41).